Consider the following 824-residue polypeptide: Acyl-homoserine lactone acylase QuiP (824 aa).

An N-terminal signal peptide occupies residues 1 to 26 (MASPALRHFLPRFGAAAAAASFLSLA). The active-site Nucleophile is the Ser264.

Belongs to the peptidase S45 family. As to quaternary structure, heterodimer of an alpha subunit and a beta subunit processed from the same precursor.

It is found in the periplasm. The enzyme catalyses an N-acyl-L-homoserine lactone + H2O = L-homoserine lactone + a carboxylate. Catalyzes the deacylation of acyl-homoserine lactone (AHL or acyl-HSL), releasing homoserine lactone (HSL) and the corresponding fatty acid. Possesses a specificity for the degradation of long-chain acyl-HSLs (side chains of seven or more carbons in length). The sequence is that of Acyl-homoserine lactone acylase QuiP (quiP) from Pseudomonas syringae pv. syringae (strain B728a).